The chain runs to 268 residues: MRAGELKSLRVAVLGMSLAVGATAAGPARAFDPGAGVTKESGPFALFKFGFSAYKSGRKDEAVEAYRYAAEKGHTGSRWALANMYAYGDGVAENDLEAFKIYSEIAQQGVEPGSEDTGYFVNALISLAGYYRRGIPDTPVRSDLSQARQLYFQAASTFGVAEAQFQLARMLLSGEGGSVNVQQAKKWLNRARKNGHAGAMGVFGNVIFQEGQTARGLAYMTAALGQCSPKDRPWLQAMQEQAFSLATEDDRRVAITMSQNMHLQNDDD.

Positions M1–A22 are cleaved as a signal peptide.

In terms of biological role, negatively modulates exopolysaccharide (EPS) biosynthesis. The chain is Exopolysaccharide production negative regulator (exoR) from Rhizobium meliloti (strain 1021) (Ensifer meliloti).